The sequence spans 681 residues: DNA ligase (681 aa).

NAD(+) contacts are provided by residues 34-38 (DAEYD), 83-84 (SL), and glutamate 115. The active-site N6-AMP-lysine intermediate is lysine 117. Positions 138, 185, 301, and 325 each coordinate NAD(+). Positions 419, 422, 437, and 443 each coordinate Zn(2+). The region spanning 602–681 (RKSDVLAGQT…AALLALIGER (80 aa)) is the BRCT domain.

It belongs to the NAD-dependent DNA ligase family. LigA subfamily. Mg(2+) is required as a cofactor. The cofactor is Mn(2+).

It catalyses the reaction NAD(+) + (deoxyribonucleotide)n-3'-hydroxyl + 5'-phospho-(deoxyribonucleotide)m = (deoxyribonucleotide)n+m + AMP + beta-nicotinamide D-nucleotide.. Its function is as follows. DNA ligase that catalyzes the formation of phosphodiester linkages between 5'-phosphoryl and 3'-hydroxyl groups in double-stranded DNA using NAD as a coenzyme and as the energy source for the reaction. It is essential for DNA replication and repair of damaged DNA. The polypeptide is DNA ligase (Chloroflexus aggregans (strain MD-66 / DSM 9485)).